The sequence spans 190 residues: Vexin (190 aa).

A disordered region spans residues 88 to 156 (AEKKASRFSR…DEATLPLTAH (69 aa)). A compositionally biased stretch (polar residues) spans 117-133 (TDKQNAPTVPASPSSYE). Residues 136–149 (GCREQRPENPKDEA) show a composition bias toward basic and acidic residues.

Belongs to the vexin family. Expressed in differentiating progenitors in the developing central nervous system (CNS).

The protein localises to the cell membrane. It localises to the nucleus. Its function is as follows. Required for neurogenesis in the neural plate and retina. Cooperates with cell cycle inhibitor cdknx/p27(xic1) to enhance neurogenesis and increase the levels of the neuronal determination factor neurog2/X-ngngr-1. This is Vexin from Xenopus laevis (African clawed frog).